The primary structure comprises 258 residues: Eukaryotic translation initiation factor 3 subunit J (258 aa).

Positions 1-11 (MAAAAAAAGDS) are enriched in low complexity. Residues 1–108 (MAAAAAAAGD…LEEPEEPKVL (108 aa)) form a disordered region. Position 2 is an N-acetylalanine (alanine 2). Positions 2–69 (AAAAAAAGDS…KEEAEVKPEV (68 aa)) are sufficient for interaction with EIF3B. 3 positions are modified to phosphoserine: serine 11, serine 13, and serine 20. Residues 40 to 59 (EGEDEDEDVKDNWDDDDDEK) show a composition bias toward acidic residues. Residues 60–106 (KEEAEVKPEVKISEKKKIAEKIKEKERQQKKRQEEIKKRLEEPEEPK) are compositionally biased toward basic and acidic residues. Positions 70-135 (KISEKKKIAE…ESDLELAKET (66 aa)) form a coiled coil. A Glycyl lysine isopeptide (Lys-Gly) (interchain with G-Cter in SUMO2) cross-link involves residue lysine 106. A Phosphothreonine modification is found at threonine 109. Serine 127 is modified (phosphoserine). Positions 217-238 (SKAKKKKKGVVPGGGLKATMKD) are disordered. The tract at residues 243-258 (YGGYDGGYVQDYEDFM) is promotes stable association with the 40S ribosome. Position 254 is a phosphotyrosine (tyrosine 254).

As to quaternary structure, component of the eukaryotic translation initiation factor 3 (eIF-3) complex, which is composed of 13 subunits: EIF3A, EIF3B, EIF3C, EIF3D, EIF3E, EIF3F, EIF3G, EIF3H, EIF3I, EIF3J, EIF3K, EIF3L and EIF3M. The eIF-3 complex appears to include 3 stable modules: module A is composed of EIF3A, EIF3B, EIF3G and EIF3I; module B is composed of EIF3F, EIF3H, and EIF3M; and module C is composed of EIF3C, EIF3D, EIF3E, EIF3K and EIF3L. EIF3C of module C binds EIF3B of module A and EIF3H of module B, thereby linking the three modules. EIF3J is a labile subunit that binds to the eIF-3 complex via EIF3B. The eIF-3 complex interacts with RPS6KB1 under conditions of nutrient depletion. Mitogenic stimulation leads to binding and activation of a complex composed of MTOR and RPTOR, leading to phosphorylation and release of RPS6KB1 and binding of EIF4B to eIF-3. Post-translationally, phosphorylated. Phosphorylation is enhanced upon serum stimulation.

It localises to the cytoplasm. Its function is as follows. Component of the eukaryotic translation initiation factor 3 (eIF-3) complex, which is required for several steps in the initiation of protein synthesis. The eIF-3 complex associates with the 40S ribosome and facilitates the recruitment of eIF-1, eIF-1A, eIF-2:GTP:methionyl-tRNAi and eIF-5 to form the 43S pre-initiation complex (43S PIC). The eIF-3 complex stimulates mRNA recruitment to the 43S PIC and scanning of the mRNA for AUG recognition. The eIF-3 complex is also required for disassembly and recycling of post-termination ribosomal complexes and subsequently prevents premature joining of the 40S and 60S ribosomal subunits prior to initiation. The eIF-3 complex specifically targets and initiates translation of a subset of mRNAs involved in cell proliferation, including cell cycling, differentiation and apoptosis, and uses different modes of RNA stem-loop binding to exert either translational activation or repression. The sequence is that of Eukaryotic translation initiation factor 3 subunit J from Homo sapiens (Human).